The sequence spans 201 residues: Ciliary microtubule inner protein 2C (201 aa).

Belongs to the CIMIP2 family. In terms of assembly, microtubule inner protein component of sperm flagellar doublet microtubules.

It localises to the cytoplasm. Its subcellular location is the cytoskeleton. It is found in the cilium axoneme. The protein resides in the flagellum axoneme. Its function is as follows. Microtubule inner protein (MIP) part of the dynein-decorated doublet microtubules (DMTs) in cilia axoneme, which is required for motile cilia beating. Binds to the intra-tubulin interfaces. The protein is Ciliary microtubule inner protein 2C (CIMIP2C) of Bos taurus (Bovine).